The following is a 177-amino-acid chain: Large ribosomal subunit protein uL6 (177 aa).

The protein belongs to the universal ribosomal protein uL6 family. As to quaternary structure, part of the 50S ribosomal subunit.

In terms of biological role, this protein binds to the 23S rRNA, and is important in its secondary structure. It is located near the subunit interface in the base of the L7/L12 stalk, and near the tRNA binding site of the peptidyltransferase center. The chain is Large ribosomal subunit protein uL6 from Latilactobacillus sakei subsp. sakei (strain 23K) (Lactobacillus sakei subsp. sakei).